The sequence spans 170 residues: Adenine phosphoribosyltransferase (170 aa).

Belongs to the purine/pyrimidine phosphoribosyltransferase family. Homodimer.

Its subcellular location is the cytoplasm. The catalysed reaction is AMP + diphosphate = 5-phospho-alpha-D-ribose 1-diphosphate + adenine. The protein operates within purine metabolism; AMP biosynthesis via salvage pathway; AMP from adenine: step 1/1. Functionally, catalyzes a salvage reaction resulting in the formation of AMP, that is energically less costly than de novo synthesis. The chain is Adenine phosphoribosyltransferase from Mesoplasma florum (strain ATCC 33453 / NBRC 100688 / NCTC 11704 / L1) (Acholeplasma florum).